A 183-amino-acid polypeptide reads, in one-letter code: Phosphopantetheine adenylyltransferase (183 aa).

T13 contributes to the substrate binding site. ATP contacts are provided by residues 13–14 (TF) and H21. Residues K45, L81, and R95 each coordinate substrate. ATP is bound by residues 96 to 98 (GLR), E106, and 131 to 137 (HQFISSR).

This sequence belongs to the bacterial CoaD family. As to quaternary structure, homohexamer. Requires Mg(2+) as cofactor.

Its subcellular location is the cytoplasm. The catalysed reaction is (R)-4'-phosphopantetheine + ATP + H(+) = 3'-dephospho-CoA + diphosphate. It functions in the pathway cofactor biosynthesis; coenzyme A biosynthesis; CoA from (R)-pantothenate: step 4/5. In terms of biological role, reversibly transfers an adenylyl group from ATP to 4'-phosphopantetheine, yielding dephospho-CoA (dPCoA) and pyrophosphate. The polypeptide is Phosphopantetheine adenylyltransferase (Rhodospirillum centenum (strain ATCC 51521 / SW)).